A 616-amino-acid chain; its full sequence is Dihydroxy-acid dehydratase (616 aa).

Asp-81 is a Mg(2+) binding site. Residue Cys-122 participates in [2Fe-2S] cluster binding. Residues Asp-123 and Lys-124 each coordinate Mg(2+). Lys-124 is modified (N6-carboxylysine). Cys-195 lines the [2Fe-2S] cluster pocket. Glu-491 is a binding site for Mg(2+). The active-site Proton acceptor is Ser-517.

It belongs to the IlvD/Edd family. As to quaternary structure, homodimer. Requires [2Fe-2S] cluster as cofactor. Mg(2+) is required as a cofactor.

The enzyme catalyses (2R)-2,3-dihydroxy-3-methylbutanoate = 3-methyl-2-oxobutanoate + H2O. It carries out the reaction (2R,3R)-2,3-dihydroxy-3-methylpentanoate = (S)-3-methyl-2-oxopentanoate + H2O. The protein operates within amino-acid biosynthesis; L-isoleucine biosynthesis; L-isoleucine from 2-oxobutanoate: step 3/4. It functions in the pathway amino-acid biosynthesis; L-valine biosynthesis; L-valine from pyruvate: step 3/4. Functionally, functions in the biosynthesis of branched-chain amino acids. Catalyzes the dehydration of (2R,3R)-2,3-dihydroxy-3-methylpentanoate (2,3-dihydroxy-3-methylvalerate) into 2-oxo-3-methylpentanoate (2-oxo-3-methylvalerate) and of (2R)-2,3-dihydroxy-3-methylbutanoate (2,3-dihydroxyisovalerate) into 2-oxo-3-methylbutanoate (2-oxoisovalerate), the penultimate precursor to L-isoleucine and L-valine, respectively. The sequence is that of Dihydroxy-acid dehydratase from Methylocella silvestris (strain DSM 15510 / CIP 108128 / LMG 27833 / NCIMB 13906 / BL2).